The chain runs to 214 residues: MSKSQLTSVFFILLCALSPIYGAFEYMQLVLTWPITFCRIKHCERTPTNFTIHGLWPDNHTTMLNYCDRSKPYNMFTDGKKKNDLDERWPDLTKTKFDSLDKQAFWKDEYVKHGTCCSDKFDREQYFDLAMTLRDKFDLLSSLRNHGISRGFSYTVQNLNNTIKAITGGFPNLTCSRLRELKEIGICFDETVKNVIDCPNPKTCKPTNKGVMFP.

The signal sequence occupies residues 1–22 (MSKSQLTSVFFILLCALSPIYG). Residues Cys-38 and Cys-43 are joined by a disulfide bond. N-linked (GlcNAc...) asparagine glycosylation is present at Asn-49. His-53 (proton donor) is an active-site residue. His-53 contacts RNA. An N-linked (GlcNAc...) asparagine glycan is attached at Asn-59. A disulfide bridge links Cys-67 with Cys-116. Residues 91-92 (DL), Lys-94, and Phe-105 each bind RNA. Glu-109 is a catalytic residue. Position 112-113 (112-113 (KH)) interacts with RNA. The active-site Proton acceptor is His-113. Asn-160 carries N-linked (GlcNAc...) asparagine glycosylation. 2 disulfides stabilise this stretch: Cys-175/Cys-204 and Cys-187/Cys-198.

This sequence belongs to the RNase T2 family.

It is found in the secreted. The protein resides in the extracellular space. The enzyme catalyses a ribonucleotidyl-ribonucleotide-RNA + H2O = a 3'-end 3'-phospho-ribonucleotide-RNA + a 5'-end dephospho-ribonucleoside-RNA + H(+). Its function is as follows. Self-incompatibility (SI) is the inherited ability of a flowering plant to prevent self-fertilization by discriminating between self and non-self pollen during pollination. In many species of the Solanaceae, self-incompatibility is controlled by the single, multiallelic locus S. This stylar glycoprotein is associated with expression of self-incompatibility in potato. This chain is Ribonuclease S-2 (S-2), found in Nicotiana alata (Winged tobacco).